Reading from the N-terminus, the 1418-residue chain is MAHYRVSSEVENIMNRDRSHRKNEEEDEEEALKLAAMEKLQRLPTYDRARKAVLKGITGGFKEIDMKDLGLAERRELFDRVMTMDDEDWHGEYLRRLKSRFDRVSLHLPTIEVRFEDLNVTAEAYAGSKTVPTVLNSYVNLLKGIGTKIRVLPDRKKRISILNDVSGIIKPGRLTLLLGPPGSGKSTLLKALSGKTETGLRSTGKVTYNGHELHEFVPERTAGYIDQYDVHLPDLTVRETLKFSAKCQGVGTGYDMLAELLRREKDLNIKPDPYLDALMKASVIKGHKEYVVTDYVLKVLGLEICADTIVGNHMKRGISGGQKKRVTTGEMLVGPVGAFFMDNISDGLDSSTTFQIVKSIKQMIHVFDKTALISLLQPPPETFELFDDVIILGEGHIVYQGPREDVLEFFEFMGFKCPERKGIADYLQEILSKKDQEQYWANPELPYRYVTAKKFEEGFKIHHFGRAMRSQLATPFDRLKNHRAALTRTTYGASKLELLKACLERESILMKRNLRTFVLKSLQLIINAILIGVVFWQQKNYPSTVEDGIIYMGAIYLEVQMIVFSGFFELPMTIDKLPVFYKQRHFSFYPSWAFSLPTSIITFPLSFVEVFIVVLITYFTIGYDLTVPSFLKHYLVLALCGQMSYGLFRCIAAVTRNHVVSNTMGCLAVMWLMTFSGYVLSRNQVHKWLTWAYWTSPMMYIQTAVSVNEFRSESWKDGLGVAVLKSRGFFVETYWYWIGLLALILSTILSNIITSLCLAFLKQYGISKTAVLPDEREEADSNNTTGRDYTGTTMERFFDRVVTTRTCNDKKLRIPFKPLYMTFENITYSVDTPKEMKEKGIRENKLVLLNGLSGAFRPGVLTALMGVSGAGKTTLMDVLAGRKNTGYIQGEIYVSGFPKKQDSFARVSGYCEQSDIHSPLLTVYESLLYSAWLRLPPDIDTHTRELFIEEVMELIELKALREMLVGYVGISGLSTEQRKRMTIAVELVANPSILFMDEPTSGLDARAAAIVMRTVRNTVDTGRTVVCTIHQPSIDIFESFDELFLLTRGGEEIYVGPIGHHSSQLIEYFEGIRGVGKIKEGYNPATWALEVTTRAQEDVLGVTFAQVYKKSNLYRRNKDLIKELNNIPPHAQDIHFSTKYSQSYLSQFQACLWKQHKSYWRNVPYNAVRFSFGAAVGIMYGIIFWSLGKRKGTRQDIFNSVGAMSTVVGFLSSQSAATVRPVVIAERTVFYREAGAGMYSALPYAFSQVIIEIPYTMAQACIYGVIVYGMIGYEWTASKFFLNIFFTFISILYSIYTGIMVISVSPNQEIASILNGVISTSWNVFSGFTIPRPRMHVWLRWFTYVCPGWWGLYGLTIAQYGDVETRLDTGETVVEFMKNYYGYEYNFLWVVSLTLIAFSMFFVFIYAFSVKILNFQKR.

The disordered stretch occupies residues 1–27 (MAHYRVSSEVENIMNRDRSHRKNEEED). An ABC transporter 1 domain is found at 147–419 (TKIRVLPDRK…FEFMGFKCPE (273 aa)). An ATP-binding site is contributed by 179-186 (GPPGSGKS). The ABC transmembrane type-2 1 domain maps to 497–710 (ELLKACLERE…IQTAVSVNEF (214 aa)). The next 6 helical transmembrane spans lie at 516–536 (TFVL…VVFW), 548–568 (GIIY…SGFF), 600–620 (IITF…TYFT), 634–654 (YLVL…IAAV), 659–679 (VVSN…SGYV), and 729–749 (FFVE…STIL). The region spanning 821 to 1073 (MTFENITYSV…QLIEYFEGIR (253 aa)) is the ABC transporter 2 domain. 866-873 (GVSGAGKT) lines the ATP pocket. Positions 1146 to 1360 (SQFQACLWKQ…GLYGLTIAQY (215 aa)) constitute an ABC transmembrane type-2 2 domain. The next 7 helical transmembrane spans lie at 1167–1187 (AVRF…FWSL), 1197–1217 (IFNS…QSAA), 1249–1269 (VIIE…IVYG), 1284–1304 (IFFT…VISV), 1310–1330 (IASI…GFTI), 1341–1361 (WFTY…AQYG), and 1387–1407 (FLWV…FIYA).

The protein belongs to the ABC transporter superfamily. ABCG family. PDR (TC 3.A.1.205) subfamily. Expressed in roots and siliques at low levels.

The protein resides in the membrane. Functionally, may be a general defense protein. This is ABC transporter G family member 38 (ABCG38) from Arabidopsis thaliana (Mouse-ear cress).